The following is a 62-amino-acid chain: uncharacterized protein (62 aa).

2 consecutive transmembrane segments (helical) span residues 9–29 and 42–62; these read HNELLEFFHLFVTIQWLALIG and AAVVGFFIRFTFGTPIFLQLL.

The protein localises to the membrane. This is an uncharacterized protein from Saccharomyces cerevisiae (strain ATCC 204508 / S288c) (Baker's yeast).